A 141-amino-acid polypeptide reads, in one-letter code: Hemoglobin subunit alpha (141 aa).

The region spanning 1-141 (VLSADDKANV…VSTVLTSKYR (141 aa)) is the Globin domain. The residue at position 3 (S3) is a Phosphoserine. K7 and K11 each carry N6-succinyllysine. K16 carries the post-translational modification N6-acetyllysine; alternate. The residue at position 16 (K16) is an N6-succinyllysine; alternate. Y24 bears the Phosphotyrosine mark. S35 bears the Phosphoserine mark. Residue K40 is modified to N6-succinyllysine. A Phosphoserine modification is found at S49. H58 serves as a coordination point for O2. Position 87 (H87) interacts with heme b. S102 carries the phosphoserine modification. T108 bears the Phosphothreonine mark. A phosphoserine mark is found at S124 and S131. Phosphothreonine is present on residues T134 and T137. Position 138 is a phosphoserine (S138).

This sequence belongs to the globin family. In terms of assembly, heterotetramer of two alpha chains and two beta chains. Red blood cells.

In terms of biological role, involved in oxygen transport from the lung to the various peripheral tissues. The chain is Hemoglobin subunit alpha from Peromyscus californicus (California mouse).